The primary structure comprises 189 residues: Elongation factor P (189 aa).

Lys-34 is modified (N6-(3,6-diaminohexanoyl)-5-hydroxylysine).

This sequence belongs to the elongation factor P family. Post-translationally, may be beta-lysylated on the epsilon-amino group of Lys-34 by the combined action of EpmA and EpmB, and then hydroxylated on the C5 position of the same residue by EpmC (if this protein is present). Lysylation is critical for the stimulatory effect of EF-P on peptide-bond formation. The lysylation moiety may extend toward the peptidyltransferase center and stabilize the terminal 3-CCA end of the tRNA. Hydroxylation of the C5 position on Lys-34 may allow additional potential stabilizing hydrogen-bond interactions with the P-tRNA.

The protein localises to the cytoplasm. Its pathway is protein biosynthesis; polypeptide chain elongation. Involved in peptide bond synthesis. Alleviates ribosome stalling that occurs when 3 or more consecutive Pro residues or the sequence PPG is present in a protein, possibly by augmenting the peptidyl transferase activity of the ribosome. Modification of Lys-34 is required for alleviation. This is Elongation factor P from Dichelobacter nodosus (strain VCS1703A).